The chain runs to 182 residues: Ribosome-recycling factor (182 aa).

Belongs to the RRF family.

The protein resides in the cytoplasm. Responsible for the release of ribosomes from messenger RNA at the termination of protein biosynthesis. May increase the efficiency of translation by recycling ribosomes from one round of translation to another. This is Ribosome-recycling factor from Synechococcus sp. (strain CC9605).